Consider the following 259-residue polypeptide: Small ribosomal subunit protein uS2 (259 aa).

The protein belongs to the universal ribosomal protein uS2 family.

The polypeptide is Small ribosomal subunit protein uS2 (Fervidobacterium nodosum (strain ATCC 35602 / DSM 5306 / Rt17-B1)).